Consider the following 187-residue polypeptide: Elongation factor P (187 aa).

The protein belongs to the elongation factor P family.

It localises to the cytoplasm. The protein operates within protein biosynthesis; polypeptide chain elongation. Involved in peptide bond synthesis. Stimulates efficient translation and peptide-bond synthesis on native or reconstituted 70S ribosomes in vitro. Probably functions indirectly by altering the affinity of the ribosome for aminoacyl-tRNA, thus increasing their reactivity as acceptors for peptidyl transferase. The protein is Elongation factor P of Kocuria rhizophila (strain ATCC 9341 / DSM 348 / NBRC 103217 / DC2201).